Reading from the N-terminus, the 813-residue chain is Envelope glycoprotein H (813 aa).

Positions 1-18 are cleaved as a signal peptide; that stretch reads MGLPGSIVFLIMIHAFCA. Topologically, residues 19 to 769 are virion surface; it reads KKTPTNTLPS…ESERVTIISA (751 aa). Residues Asn62 and Asn116 are each glycosylated (N-linked (GlcNAc...) asparagine; by host). The segment at 135 to 159 is disordered; sequence DRSGLKLDDKDDAQPTGTNPPTELK. A compositionally biased stretch (basic and acidic residues) spans 137 to 147; the sequence is SGLKLDDKDDA. An interaction with gL region spans residues 212–273; sequence DGAEVIMKIG…FTRRPYLIYL (62 aa). N-linked (GlcNAc...) asparagine; by host glycans are attached at residues Asn247, Asn279, Asn410, Asn434, Asn469, Asn576, Asn727, and Asn750. A helical membrane pass occupies residues 770 to 790; the sequence is TYVATATAGASIAISIAIITV. Topologically, residues 791 to 813 are intravirion; the sequence is RMIINNFRYNYHRYKKLSLYDDL.

This sequence belongs to the herpesviridae glycoprotein H family. As to quaternary structure, interacts with glycoprotein L (gL); this interaction is necessary for the correct processing and cell surface expression of gH. The heterodimer gH/gL seems to interact with gB trimers during fusion. In terms of processing, N-glycosylated, O-glycosylated, and sialylated.

Its subcellular location is the virion membrane. The protein localises to the host cell membrane. It is found in the host endosome membrane. Functionally, the heterodimer glycoprotein H-glycoprotein L is required for the fusion of viral and plasma membranes leading to virus entry into the host cell. Following initial binding to host receptor, membrane fusion is mediated by the fusion machinery composed of gB and the heterodimer gH/gL. May also be involved in the fusion between the virion envelope and the outer nuclear membrane during virion morphogenesis. The polypeptide is Envelope glycoprotein H (Gallus gallus (Chicken)).